Here is a 134-residue protein sequence, read N- to C-terminus: uncharacterized protein (134 aa).

A helical membrane pass occupies residues N4–E24.

It localises to the membrane. This is an uncharacterized protein from Invertebrate iridescent virus 6 (IIV-6).